The sequence spans 103 residues: Large ribosomal subunit protein bL21 (103 aa).

The protein belongs to the bacterial ribosomal protein bL21 family. In terms of assembly, part of the 50S ribosomal subunit. Contacts protein L20.

This protein binds to 23S rRNA in the presence of protein L20. This chain is Large ribosomal subunit protein bL21, found in Mycolicibacterium smegmatis (strain ATCC 700084 / mc(2)155) (Mycobacterium smegmatis).